The sequence spans 465 residues: Serine/threonine-protein kinase 38 (465 aa).

At A2 the chain carries N-acetylalanine. Positions K62–E87 are interaction with S100B. Residue T74 is modified to Phosphothreonine. The 294-residue stretch at F89–F382 folds into the Protein kinase domain. ATP contacts are provided by residues I95–V103 and K118. The active-site Proton acceptor is the D212. S264 bears the Phosphoserine mark. S281 bears the Phosphoserine; by autocatalysis mark. The UFM1-interacting motif (UFIM) motif lies at W306 to I311. One can recognise an AGC-kinase C-terminal domain in the interval E383 to G455. Position 444 is a phosphothreonine; by STK24/MST3 (T444).

The protein belongs to the protein kinase superfamily. AGC Ser/Thr protein kinase family. Homodimeric S100B binds two molecules of STK38. Interacts with MOB1 and MOB2. Interacts with MAP3K1 and MAP3K2 (via the kinase domain). Forms a tripartite complex with MOBKL1B and STK3/MST2. Interacts with MICAL1; leading to inhibit the protein kinase activity by antagonizing activation by MST1/STK4. Mg(2+) serves as cofactor. Post-translationally, ISGylated. In terms of processing, phosphorylated by STK3/MST2 and this is enhanced by MOBKL1B.

It localises to the nucleus. It is found in the cytoplasm. The protein localises to the chromosome. It catalyses the reaction L-seryl-[protein] + ATP = O-phospho-L-seryl-[protein] + ADP + H(+). It carries out the reaction L-threonyl-[protein] + ATP = O-phospho-L-threonyl-[protein] + ADP + H(+). Activated by binding of S100B which releases autoinhibitory N-lobe interactions, enabling ATP to bind and the autophosphorylation of Ser-281. Thr-444 then undergoes calcium-dependent phosphorylation by STK24/MST3. Interactions between phosphorylated Thr-444 and the N-lobe promote additional structural changes that complete the activation of the kinase. Autoinhibition is also released by the binding of MOB1/MOBKL1A and MOB2/HCCA2 to the N-terminal of STK38. Serine/threonine-protein kinase that acts as a negative regulator of MAP3K1/2 signaling. Converts MAP3K2 from its phosphorylated form to its non-phosphorylated form and inhibits autophosphorylation of MAP3K2. Acts as an ufmylation 'reader' in a kinase-independent manner: specifically recognizes and binds mono-ufmylated histone H4 in response to DNA damage, promoting the recruitment of SUV39H1 to the double-strand breaks, resulting in ATM activation. The polypeptide is Serine/threonine-protein kinase 38 (STK38) (Bos taurus (Bovine)).